We begin with the raw amino-acid sequence, 287 residues long: Orotidine 5'-phosphate decarboxylase (287 aa).

K95 serves as the catalytic Proton donor.

Belongs to the OMP decarboxylase family. Type 2 subfamily.

The catalysed reaction is orotidine 5'-phosphate + H(+) = UMP + CO2. It participates in pyrimidine metabolism; UMP biosynthesis via de novo pathway; UMP from orotate: step 2/2. In Albidiferax ferrireducens (strain ATCC BAA-621 / DSM 15236 / T118) (Rhodoferax ferrireducens), this protein is Orotidine 5'-phosphate decarboxylase.